Consider the following 496-residue polypeptide: Deoxyribodipyrimidine photo-lyase (496 aa).

Positions 28–160 (GPVVYWMFRD…EVDAHNVVPM (133 aa)) constitute a Photolyase/cryptochrome alpha/beta domain. FAD-binding positions include Tyr-256, 269-273 (LSGLS), 307-315 (ELIVRRELS), and 415-417 (DGR). Glu-307 lines the DNA pocket.

This sequence belongs to the DNA photolyase class-2 family. The cofactor is FAD. In terms of tissue distribution, highly expressed in flowers. Expressed in roots and stems.

It is found in the nucleus. The catalysed reaction is cyclobutadipyrimidine (in DNA) = 2 pyrimidine residues (in DNA).. Functionally, involved in repair of UV radiation-induced DNA damage. Catalyzes the light-dependent monomerization (300-600 nm) of cyclobutylpyrimidine dimers (CPDs), which are formed between adjacent bases on the same DNA strand upon exposure to ultraviolet radiation. Required for plant survival in the presence of UV-B light. Not involved in the repair of (6-4) photoproducts. The polypeptide is Deoxyribodipyrimidine photo-lyase (PHR1) (Arabidopsis thaliana (Mouse-ear cress)).